Consider the following 102-residue polypeptide: Small ribosomal subunit protein uS10 (102 aa).

The protein belongs to the universal ribosomal protein uS10 family. As to quaternary structure, part of the 30S ribosomal subunit.

Functionally, involved in the binding of tRNA to the ribosomes. The chain is Small ribosomal subunit protein uS10 from Roseiflexus sp. (strain RS-1).